A 910-amino-acid chain; its full sequence is Triacylglycerol lipase 4 (910 aa).

Residues 51–66 show a composition bias toward basic and acidic residues; sequence SKDNSDVERVEEDAGK. Residues 51-120 form a disordered region; it reads SKDNSDVERV…TDEGEDERQG (70 aa). Position 55 is a phosphoserine (Ser55). The segment covering 70-85 has biased composition (polar residues); it reads TGKNKTTNKVNFNLDT. Positions 90 to 116 are enriched in acidic residues; that stretch reads KLDDDQETVTENENNDIEMVETDEGED. One can recognise a PNPLA domain in the interval 282-483; the sequence is LVLSGGGTFG…DNDLPISRLS (202 aa). The GXGXXG signature appears at 286–291; it reads GGGTFG. The GXSXG motif lies at 313-317; it reads GSSAG. Catalysis depends on Ser315, which acts as the Nucleophile. The active-site Proton acceptor is the Asp470. Disordered stretches follow at residues 657–683 and 713–777; these read EQTS…DNHI and SPSG…PILQ. The span at 666–683 shows a compositional bias: polar residues; the sequence is PENSTLLTRTPTKGDNHI. Thr675 is subject to Phosphothreonine; by Cdk1. A phosphoserine mark is found at Ser737, Ser749, Ser751, and Ser836. Over residues 739-768 the composition is skewed to polar residues; that stretch reads TISTSRRPAKSFSFSVASPTSRMLRQSSKI. The disordered stretch occupies residues 874-910; the sequence is RRHSIDGRPPSQATKSSPFRSRPSSSTQHKSTTSFTQ. The segment covering 889–899 has biased composition (low complexity); that stretch reads SSPFRSRPSSS. Residue Ser890 is modified to Phosphoserine; by Cdk1. The span at 900-910 shows a compositional bias: polar residues; the sequence is TQHKSTTSFTQ.

Phosphorylation at Thr-675 and Ser-890 by Cdk1/CDC28 stimulates enzyme activity in vivo.

The protein localises to the lipid droplet. It carries out the reaction a triacylglycerol + H2O = a diacylglycerol + a fatty acid + H(+). The catalysed reaction is 1,2,3-tri-(9Z-octadecenoyl)-glycerol + H2O = di-(9Z)-octadecenoylglycerol + (9Z)-octadecenoate + H(+). The enzyme catalyses 1,2-dihexadecanoyl-sn-glycero-3-phosphocholine + H2O = 1-hexadecanoyl-sn-glycero-3-phosphocholine + hexadecanoate + H(+). It catalyses the reaction cholesteryl (9Z-octadecenoate) + H2O = cholesterol + (9Z)-octadecenoate + H(+). It carries out the reaction 1-(9Z-octadecenoyl)-sn-glycero-3-phosphate + (9Z)-octadecenoyl-CoA = 1,2-di-(9Z-octadecenoyl)-sn-glycero-3-phosphate + CoA. With respect to regulation, phosphorylated and activated by cyclin-dependent kinase 1 (Cdk1/CDC28). Loses its lipolytic activity in cells lacking nonpolar lipids, but retains its side activity as lysophospholipid acyltransferase. Functionally, lipid particle-localized triacylglycerol (TAG) lipase. The lipid droplet/particle is a lipid storage compartment which serves as a depot of energy and building blocks for membrane lipid biosynthesis. Involved in the mobilization of the non-polar storage lipids triacylglycerols (TAGs) from lipid particles by hydrolysis of TAGs, releasing and supplying specific fatty acids to the appropriate metabolic pathways. Also has steryl ester (SE) hydrolase and phospholipase A(2) (PLA(2)) activities, and catalyzes the acylation of lysophosphatidic acid (LPA). Contributes to early bud formation in late G1 phase of the cell cycle upon phosphorylation and activation by cyclin-dependent kinase 1 (Cdk1/CDC28). The protein is Triacylglycerol lipase 4 (TGL4) of Saccharomyces cerevisiae (strain ATCC 204508 / S288c) (Baker's yeast).